The following is a 233-amino-acid chain: MKKPIIEFHNVSKKFGNKLPINNVSFTVKKNNITTLIGPNGAGKTTIVRLMLGLEKPTSGEIIIDPRLKIGYVPQKFNLSSDLPITVKKFLDLLAPNNLTNDIKEIHSFIDLERLKDQKISTLSGGQFQKIVLASSLLSKPDLIILDEPLQSLDVTSQQEFYQLISLIRKKLDITVFMISHDLFTVIKNSDQVICLNGHICCTGTPNAITPNSDFSNALSSLGFYTHHHDHKH.

An ABC transporter domain is found at 6–222 (IEFHNVSKKF…SDFSNALSSL (217 aa)). 38 to 45 (GPNGAGKT) is an ATP binding site.

The protein belongs to the ABC transporter superfamily. Zinc importer (TC 3.A.1.15.5) family. In terms of assembly, the complex is composed of two ATP-binding proteins (ZnuC), two transmembrane proteins (ZnuB) and a solute-binding protein (ZnuA).

Its subcellular location is the cell inner membrane. The catalysed reaction is Zn(2+)(out) + ATP(in) + H2O(in) = Zn(2+)(in) + ADP(in) + phosphate(in) + H(+)(in). Functionally, part of the ABC transporter complex ZnuABC involved in zinc import. Responsible for energy coupling to the transport system. The sequence is that of Zinc import ATP-binding protein ZnuC from Rickettsia bellii (strain RML369-C).